Here is a 301-residue protein sequence, read N- to C-terminus: uncharacterized protein (301 aa).

9 helical membrane passes run 1–21, 33–53, 72–92, 101–121, 124–144, 194–214, 220–240, 253–273, and 274–294; these read MSWI…LRII, SVLF…YVYY, AMSL…KIPW, FGII…IILI, FAWL…KTFY, VLIE…IFAI, IIYT…FCLA, LALI…IAIP, and EYVA…ASII.

This sequence belongs to the TerC family.

It localises to the cell membrane. This is an uncharacterized protein from Rickettsia conorii (strain ATCC VR-613 / Malish 7).